A 249-amino-acid chain; its full sequence is Low affinity immunoglobulin gamma Fc region receptor III-A (249 aa).

Positions 1 to 16 are cleaved as a signal peptide; that stretch reads MWQLLPSTALLLVASA. At 17-198 the chain is on the extracellular side; it reads RPQAADLPKA…IQGPPVPSTS (182 aa). 2 Ig-like C2-type domains span residues 24–104 and 119–172; these read PKAV…LEVH and EGEP…YFCR. 2 disulfide bridges follow: Cys47–Cys88 and Cys127–Cys171. Asn55, Asn63, Asn166, and Asn179 each carry an N-linked (GlcNAc...) asparagine glycan. Residues 199-219 form a helical membrane-spanning segment; sequence ALLPFWPHIPFAVVMALLFAV. At 220–249 the chain is on the cytoplasmic side; the sequence is DTGLYFAMQRHLHNSKRAWENSKVSWKQDP.

In terms of assembly, forms a heterooligomeric complex with ITAM-containing signaling subunits FCER1G. Interacts (via transmembrane domain) with signaling subunits; this interaction is a prerequisite for receptor complex expression on the cell surface and intracellular signal transduction. Binds the Fc region of antigen-complexed IgG.

It localises to the cell membrane. Its function is as follows. Receptor for the invariable Fc fragment of immunoglobulin gamma (IgG). Optimally activated upon binding of clustered antigen-IgG complexes displayed on cell surfaces, triggers lysis of antibody-coated cells, a process known as antibody-dependent cellular cytotoxicity (ADCC). Does not bind free monomeric IgG, thus avoiding inappropriate effector cell activation in the absence of antigenic trigger. Mediates IgG effector functions on natural killer (NK) cells. Binds antigen-IgG complexes generated upon infection and triggers NK cell-dependent cytokine production and degranulation to limit viral load and propagation. Fc-binding subunit that associates with FCER1G adapter to form functional signaling complexes. Following the engagement of antigen-IgG complexes, triggers phosphorylation of immunoreceptor tyrosine-based activation motif (ITAM)-containing adapter with subsequent activation of phosphatidylinositol 3-kinase signaling and sustained elevation of intracellular calcium that ultimately drive NK cell activation. Mediates enhanced ADCC in response to afucosylated IgGs. In Mustela putorius furo (European domestic ferret), this protein is Low affinity immunoglobulin gamma Fc region receptor III-A.